The chain runs to 357 residues: MSKRLLILEDGTIFEGEALGANLDVTGELVFNTGMTGYQESITDQSYNGQILTFTYPIVGNYGVNRDDYESIHPTCKAVVVHEAARRPSNWRMQMSFDEFLKSKNIPGITGVDTRAITKIVREHGTMKASLVQARDEVDHQMSQLQATVLPTNQVETSSTATAYPSPNTGRKVVVVDFGLKHSILRELSKRECNLTVVPYNTSAKEILEMEPDGVMLTNGPGDPTDVPEAIEMIKEVQGKIPIFGICLGHQLFSLANGATTYKMKFGHRGFNHAVREVATGRIDFTSQNHGYAVSSENLPEDLMITHVEINDNSVEGVRHKYFPAFSVQFHPDAAPGPHDASYLFDDFMDLMDNFKK.

The CPSase stretch occupies residues 1 to 168 (MSKRLLILED…STATAYPSPN (168 aa)). Residues Ser46, Gly220, and Gly222 each contribute to the L-glutamine site. Residues 172–357 (KVVVVDFGLK…FMDLMDNFKK (186 aa)) enclose the Glutamine amidotransferase type-1 domain. Cys247 (nucleophile) is an active-site residue. Residues Leu248, Gln251, Asn289, Gly291, and Tyr292 each contribute to the L-glutamine site. Active-site residues include His331 and Asp333.

The protein belongs to the CarA family. As to quaternary structure, composed of two chains; the small (or glutamine) chain promotes the hydrolysis of glutamine to ammonia, which is used by the large (or ammonia) chain to synthesize carbamoyl phosphate. Tetramer of heterodimers (alpha,beta)4.

The catalysed reaction is hydrogencarbonate + L-glutamine + 2 ATP + H2O = carbamoyl phosphate + L-glutamate + 2 ADP + phosphate + 2 H(+). The enzyme catalyses L-glutamine + H2O = L-glutamate + NH4(+). The protein operates within amino-acid biosynthesis; L-arginine biosynthesis; carbamoyl phosphate from bicarbonate: step 1/1. It participates in pyrimidine metabolism; UMP biosynthesis via de novo pathway; (S)-dihydroorotate from bicarbonate: step 1/3. Small subunit of the glutamine-dependent carbamoyl phosphate synthetase (CPSase). CPSase catalyzes the formation of carbamoyl phosphate from the ammonia moiety of glutamine, carbonate, and phosphate donated by ATP, constituting the first step of 2 biosynthetic pathways, one leading to arginine and/or urea and the other to pyrimidine nucleotides. The small subunit (glutamine amidotransferase) binds and cleaves glutamine to supply the large subunit with the substrate ammonia. In Lactococcus lactis subsp. cremoris (strain MG1363), this protein is Carbamoyl phosphate synthase small chain.